The primary structure comprises 602 residues: Sulfite reductase [NADPH] flavoprotein alpha-component (602 aa).

The region spanning 68–206 is the Flavodoxin-like domain; the sequence is ITIISASQTG…NYIQWSEELL (139 aa). FMN contacts are provided by residues 74-79, 121-124, and 157-166; these read SQTGNA, STQG, and LGDVSYNLFC. The region spanning 237–451 is the FAD-binding FR-type domain; sequence YKPAVATVLL…VEEKSNFRLP (215 aa). FAD-binding positions include Thr-325, Lys-359, 389-392, 407-409, and 422-425; these read RLYS, TVG, and GGSS. NADP(+) contacts are provided by residues 522–523, 528–532, and Asp-564; these read SR and KIYVQ. Tyr-602 provides a ligand contact to FAD.

The protein belongs to the NADPH-dependent sulphite reductase flavoprotein subunit CysJ family. In the N-terminal section; belongs to the flavodoxin family. It in the C-terminal section; belongs to the flavoprotein pyridine nucleotide cytochrome reductase family. Alpha(8)-beta(8). The alpha component is a flavoprotein, the beta component is a hemoprotein. The cofactor is FAD. FMN is required as a cofactor.

It carries out the reaction hydrogen sulfide + 3 NADP(+) + 3 H2O = sulfite + 3 NADPH + 4 H(+). It participates in sulfur metabolism; hydrogen sulfide biosynthesis; hydrogen sulfide from sulfite (NADPH route): step 1/1. Its function is as follows. Component of the sulfite reductase complex that catalyzes the 6-electron reduction of sulfite to sulfide. This is one of several activities required for the biosynthesis of L-cysteine from sulfate. The flavoprotein component catalyzes the electron flow from NADPH -&gt; FAD -&gt; FMN to the hemoprotein component. In Buchnera aphidicola subsp. Schizaphis graminum (strain Sg), this protein is Sulfite reductase [NADPH] flavoprotein alpha-component.